The chain runs to 344 residues: Tripartite motif-containing protein 44 (344 aa).

The disordered stretch occupies residues 69–165; it reads PPASGDDALP…ETEAESEFDP (97 aa). Residues 88 to 165 show a composition bias toward acidic residues; it reads EGEVESEVGE…ETEAESEFDP (78 aa). Residues 174 to 215 form a B box-type zinc finger; that stretch reads VAKRKCPDHGLDLSTYCQEDRQLICVLCPVIGAHRGHQLSTL. Zn(2+) contacts are provided by Cys179, His182, Cys201, and His207. The stretch at 290 to 325 forms a coiled coil; sequence AHVTEILADIQSHMDRLMTQMAQAKEQLDTSNESAE. Positions 309 to 344 are disordered; that stretch reads QMAQAKEQLDTSNESAEPKAEGDEEGPSGASEEEDT. Residues 330–344 are compositionally biased toward acidic residues; sequence GDEEGPSGASEEEDT. Residues Ser336 and Ser339 each carry the phosphoserine modification.

As to quaternary structure, interacts (via coiled coil) with TRIM17 (via coiled coil).

Functionally, may play a role in the process of differentiation and maturation of neuronal cells. May regulate the activity of TRIM17. Is a negative regulator of PAX6 expression. The protein is Tripartite motif-containing protein 44 (Trim44) of Rattus norvegicus (Rat).